A 133-amino-acid chain; its full sequence is Small ribosomal subunit protein bS18 (133 aa).

Positions 1–63 are disordered; that stretch reads MARPDMGGPK…GDEGGGRRGF (63 aa). The segment covering 9 to 39 has biased composition (gly residues); that stretch reads PKTGGFGGPRSGGFGGGGGGGFGGGGFGGGR. The span at 40-59 shows a compositional bias: basic and acidic residues; sequence GGDRGDRGDRDDRGGDEGGG.

It belongs to the bacterial ribosomal protein bS18 family. As to quaternary structure, part of the 30S ribosomal subunit. Forms a tight heterodimer with protein bS6.

Functionally, binds as a heterodimer with protein bS6 to the central domain of the 16S rRNA, where it helps stabilize the platform of the 30S subunit. This Anaeromyxobacter dehalogenans (strain 2CP-1 / ATCC BAA-258) protein is Small ribosomal subunit protein bS18.